The following is a 116-amino-acid chain: Large ribosomal subunit protein uL18 (116 aa).

This sequence belongs to the universal ribosomal protein uL18 family. In terms of assembly, part of the 50S ribosomal subunit; part of the 5S rRNA/L5/L18/L25 subcomplex. Contacts the 5S and 23S rRNAs.

Functionally, this is one of the proteins that bind and probably mediate the attachment of the 5S RNA into the large ribosomal subunit, where it forms part of the central protuberance. The polypeptide is Large ribosomal subunit protein uL18 (Shewanella halifaxensis (strain HAW-EB4)).